The following is a 1942-amino-acid chain: Myosin-2 (1942 aa).

One can recognise a Myosin N-terminal SH3-like domain in the interval 33–82 (DAKTSVFVAEPKESFVKGTIQSKDAGKVTVKTEAGATLTVKEDQIFPMNP). 2 positions are modified to phosphothreonine: threonine 64 and threonine 69. The 700-residue stretch at 86–785 (DKIEDMAMMT…LLGLLEEMRD (700 aa)) folds into the Myosin motor domain. Position 179-186 (179-186 (GESGAGKT)) interacts with ATP. Tyrosine 389 is modified (phosphotyrosine). Threonine 419 carries the phosphothreonine modification. Position 625 is a phosphoserine (serine 625). Positions 662–684 (LNKLMTNLRSTHPHFVRCIIPNE) are actin-binding. The residue at position 760 (histidine 760) is a Pros-methylhistidine. Residues 788 to 817 (LAQLITRTQAMCRGFLARVEYQKMVERRES) enclose the IQ domain. The stretch at 849-1930 (SAETEKEMAT…ESQVNKLRVK (1082 aa)) forms a coiled coil. Phosphoserine occurs at positions 1095 and 1099. The tract at residues 1130 to 1175 (EAERASRAKAEKQRSDLSRELEEISERLEEAGGATSAQIEMNKKRE) is disordered. Positions 1131-1159 (AERASRAKAEKQRSDLSRELEEISERLEE) are enriched in basic and acidic residues. Phosphoserine is present on residues serine 1165 and serine 1240. A Phosphothreonine modification is found at threonine 1244. Serine 1246 is subject to Phosphoserine. Threonine 1258 carries the post-translational modification Phosphothreonine. Serine 1264 is modified (phosphoserine). Threonine 1289 is subject to Phosphothreonine. A phosphoserine mark is found at serine 1291, serine 1295, serine 1306, and serine 1309. Tyrosine 1467 carries the post-translational modification Phosphotyrosine. The residue at position 1470 (threonine 1470) is a Phosphothreonine. At serine 1477 the chain carries Phosphoserine. Phosphotyrosine is present on tyrosine 1495. Position 1498 is a phosphoserine (serine 1498). Position 1504 is a phosphothreonine (threonine 1504). Serine 1517 is modified (phosphoserine). Threonine 1520 bears the Phosphothreonine mark. Phosphoserine is present on residues serine 1557, serine 1577, serine 1603, serine 1606, serine 1717, and serine 1729. A phosphothreonine mark is found at threonine 1733 and threonine 1739. Serine 1742 bears the Phosphoserine mark.

This sequence belongs to the TRAFAC class myosin-kinesin ATPase superfamily. Myosin family. In terms of assembly, muscle myosin is a hexameric protein that consists of 2 heavy chain subunits (MHC), 2 alkali light chain subunits (MLC) and 2 regulatory light chain subunits (MLC-2). Interacts with GCSAM. In terms of tissue distribution, expressed in type 2a myofibers in the tibialis anterior and soleus muscles (at protein level).

Its subcellular location is the cytoplasm. It localises to the myofibril. Its function is as follows. Myosins are actin-based motor molecules with ATPase activity essential for muscle contraction. This is Myosin-2 from Mus musculus (Mouse).